A 242-amino-acid polypeptide reads, in one-letter code: MAPK-interacting and spindle-stabilizing protein-like (242 aa).

Disordered stretches follow at residues M1–P145 and P192–H242. S2 is subject to N-acetylserine. A phosphoserine mark is found at S2, S6, and S15. A compositionally biased stretch (polar residues) spans E13 to H29. The segment covering S30–P43 has biased composition (low complexity). Composition is skewed to pro residues over residues S44–L53 and S75–T114. A compositionally biased stretch (low complexity) spans P192 to P210.

It belongs to the MISS family.

This chain is MAPK-interacting and spindle-stabilizing protein-like (Mapk1ip1l), found in Mus musculus (Mouse).